The primary structure comprises 597 residues: Aspartate--tRNA(Asp/Asn) ligase (597 aa).

Residue Glu-175 coordinates L-aspartate. The interval 199–202 (QQYK) is aspartate. Residues Arg-221 and His-456 each contribute to the L-aspartate site. 221–223 (RDE) is an ATP binding site. Residue Glu-490 participates in ATP binding. Position 497 (Arg-497) interacts with L-aspartate. Position 542–545 (542–545 (GVDR)) interacts with ATP.

It belongs to the class-II aminoacyl-tRNA synthetase family. Type 1 subfamily. Homodimer.

Its subcellular location is the cytoplasm. The catalysed reaction is tRNA(Asx) + L-aspartate + ATP = L-aspartyl-tRNA(Asx) + AMP + diphosphate. In terms of biological role, aspartyl-tRNA synthetase with relaxed tRNA specificity since it is able to aspartylate not only its cognate tRNA(Asp) but also tRNA(Asn). Reaction proceeds in two steps: L-aspartate is first activated by ATP to form Asp-AMP and then transferred to the acceptor end of tRNA(Asp/Asn). The sequence is that of Aspartate--tRNA(Asp/Asn) ligase from Beijerinckia indica subsp. indica (strain ATCC 9039 / DSM 1715 / NCIMB 8712).